The chain runs to 145 residues: Copper transporter 4 (145 aa).

The next 2 membrane-spanning stretches (helical) occupy residues 53-73 (GMYA…EWLA) and 106-126 (YLVI…AIFG).

Belongs to the copper transporter (Ctr) (TC 1.A.56) family. SLC31A subfamily. As to expression, highly expressed in roots and at lower levels in leaves, stems and flowers.

It localises to the membrane. Functionally, involved in the transport of copper. The protein is Copper transporter 4 (COPT4) of Arabidopsis thaliana (Mouse-ear cress).